The sequence spans 193 residues: Capsid protein (193 aa).

Its subcellular location is the virion. The chain is Capsid protein from Apple chlorotic leaf spot virus (isolate apple) (ACLSV).